The chain runs to 3859 residues: Transformation/transcription domain-associated protein (3859 aa).

Ala-2 carries the N-acetylalanine modification. Residues 491–526 (PAAPGPAPSPAPVPAPPPPPPPPPPATPVTPAPVPP) are compositionally biased toward pro residues. The tract at residues 491–541 (PAAPGPAPSPAPVPAPPPPPPPPPPATPVTPAPVPPFEKQGEKDKEDKQTF) is disordered. The span at 529–539 (KQGEKDKEDKQ) shows a compositional bias: basic and acidic residues. The residue at position 1628 (Ser-1628) is a Phosphoserine. The tract at residues 2010–2388 (SEVVIKWELQ…SPMAANQTPT (379 aa)) is interaction with TP53. Residues 2023 to 2044 (DQQPDSDMDPNSSGEGVNSVSS) form a disordered region. Over residues 2033–2044 (NSSGEGVNSVSS) the composition is skewed to low complexity. The Bipartite nuclear localization signal motif lies at 2047 to 2062 (KRGLSVDSAQEVKRFR). Phosphoserine occurs at positions 2051 and 2077. Lys-2543 is covalently cross-linked (Glycyl lysine isopeptide (Lys-Gly) (interchain with G-Cter in SUMO2)). Positions 2543–2554 (KQEPRERENSES) are enriched in basic and acidic residues. The disordered stretch occupies residues 2543 to 2578 (KQEPRERENSESKEEDVEIDIELAPGDQTSTPKTKE). One can recognise an FAT domain in the interval 2692–3275 (VLKYLGKTHN…YFPIRTLYLT (584 aa)). Lys-3078 carries the N6-acetyllysine modification. The PI3K/PI4K catalytic domain maps to 3500–3823 (MPRVEIVQKH…AVTAIMTRLH (324 aa)). A G-loop region spans residues 3506-3512 (VQKHNTA). The catalytic loop stretch occupies residues 3687-3695 (HLNRLNPEM). Residues 3707-3732 (VAYFRFDINDATGDLDANRPVPFRLT) form an activation loop region. Residues 3827-3859 (QFEGGESKVNTLVAAANSLDNLCRMDPAWHPWL) form the FATC domain.

Belongs to the PI3/PI4-kinase family. TRA1 subfamily. Interacts with MYC, E2F1 and E2F4 transcription factors. Interacts directly with p53/TP53. Interacts with GCN5L2. Component of various HAT complexes. Component of the PCAF complex, at least composed of TADA2L/ADA2, SUPT3H, TADA3L/ADA3, TAF5L/PAF65-beta, TAF6L/PAF65-alpha, TAF10/TAFII30, TAF12/TAFII20, TAF9/TAFII31 and TRRAP. Component of the TFTC-HAT complex, at least composed of TAF5L, TAF6L, TADA3L, SUPT3H/SPT3, TAF2/TAFII150, TAF4/TAFII135, TAF5/TAFII100, GCN5L2/GCN5, TAF10 and TRRAP. Component of the NuA4 histone acetyltransferase complex which contains the catalytic subunit KAT5/TIP60 and the subunits EP400, TRRAP/PAF400, BRD8/SMAP, EPC1, DMAP1/DNMAP1, RUVBL1/TIP49, RUVBL2, ING3, actin, ACTL6A/BAF53A, MORF4L1/MRG15, MORF4L2/MRGX, MRGBP, YEATS4/GAS41, VPS72/YL1 and MEAF6. Component of the STAGA complex, at least composed of SUPT3H, GCN5L2, SUPT7L, TAF5L, TAF6L, TADA3L, TAD1L, TAF10, TAF12, TRRAP and TAF9. The STAGA core complex is associated with a subcomplex required for histone deubiquitination composed of ATXN7L3, ENY2 and USP22. Component of the BAF53 complex, at least composed of BAF53A, RUVBL1, SMARCA4/BRG1, and TRRAP, which preferentially acetylates histone H4 (and H2A) within nucleosomes. Interacts with NPAT. Interaction with TELO2 and TTI1. Component of a SWR1-like complex.

It localises to the nucleus. In terms of biological role, adapter protein, which is found in various multiprotein chromatin complexes with histone acetyltransferase activity (HAT), which gives a specific tag for epigenetic transcription activation. Component of the NuA4 histone acetyltransferase complex which is responsible for acetylation of nucleosomal histones H4 and H2A. Plays a central role in MYC transcription activation, and also participates in cell transformation by MYC. Required for p53/TP53-, E2F1- and E2F4-mediated transcription activation. Also involved in transcription activation mediated by the adenovirus E1A, a viral oncoprotein that deregulates transcription of key genes. Probably acts by linking transcription factors such as E1A, MYC or E2F1 to HAT complexes such as STAGA thereby allowing transcription activation. Probably not required in the steps following histone acetylation in processes of transcription activation. May be required for the mitotic checkpoint and normal cell cycle progression. Component of a SWR1-like complex that specifically mediates the removal of histone H2A.Z/H2AZ1 from the nucleosome. May play a role in the formation and maintenance of the auditory system. In Homo sapiens (Human), this protein is Transformation/transcription domain-associated protein (TRRAP).